The chain runs to 258 residues: Adenylate kinase (258 aa).

52–57 (GAGKGT) contacts ATP. An NMP region spans residues 72–101 (ATGDMLRSQVAKKTELGKEAKKIMDQGGLV). Residues T73, R78, 99–101 (GLV), 128–131 (GFPR), and Q135 each bind AMP. Residues 169-206 (GRLVHPASGRSYHKVFNPPKQEMKDDITGEPLIQRSDD) are LID. Residues R170 and 179–180 (SY) contribute to the ATP site. AMP is bound by residues R203 and R214. Q242 contributes to the ATP binding site.

The protein belongs to the adenylate kinase family. AK2 subfamily. As to quaternary structure, monomer.

It is found in the cytoplasm. The protein localises to the cytosol. The protein resides in the mitochondrion intermembrane space. It catalyses the reaction AMP + ATP = 2 ADP. In terms of biological role, catalyzes the reversible transfer of the terminal phosphate group between ATP and AMP. Plays an important role in cellular energy homeostasis and in adenine nucleotide metabolism. Adenylate kinase activity is critical for regulation of the phosphate utilization and the AMP de novo biosynthesis pathways. The chain is Adenylate kinase (adk1) from Aspergillus oryzae (strain ATCC 42149 / RIB 40) (Yellow koji mold).